The following is a 110-amino-acid chain: Phosphoribosyl-ATP pyrophosphatase (110 aa).

This sequence belongs to the PRA-PH family.

It is found in the cytoplasm. It carries out the reaction 1-(5-phospho-beta-D-ribosyl)-ATP + H2O = 1-(5-phospho-beta-D-ribosyl)-5'-AMP + diphosphate + H(+). It functions in the pathway amino-acid biosynthesis; L-histidine biosynthesis; L-histidine from 5-phospho-alpha-D-ribose 1-diphosphate: step 2/9. This Clostridium botulinum (strain ATCC 19397 / Type A) protein is Phosphoribosyl-ATP pyrophosphatase.